The sequence spans 515 residues: Bifunctional purine biosynthesis protein PurH (515 aa).

One can recognise an MGS-like domain in the interval 1 to 145 (MTKRALISVS…KNHASVTVVV (145 aa)).

This sequence belongs to the PurH family.

The enzyme catalyses (6R)-10-formyltetrahydrofolate + 5-amino-1-(5-phospho-beta-D-ribosyl)imidazole-4-carboxamide = 5-formamido-1-(5-phospho-D-ribosyl)imidazole-4-carboxamide + (6S)-5,6,7,8-tetrahydrofolate. The catalysed reaction is IMP + H2O = 5-formamido-1-(5-phospho-D-ribosyl)imidazole-4-carboxamide. It participates in purine metabolism; IMP biosynthesis via de novo pathway; 5-formamido-1-(5-phospho-D-ribosyl)imidazole-4-carboxamide from 5-amino-1-(5-phospho-D-ribosyl)imidazole-4-carboxamide (10-formyl THF route): step 1/1. The protein operates within purine metabolism; IMP biosynthesis via de novo pathway; IMP from 5-formamido-1-(5-phospho-D-ribosyl)imidazole-4-carboxamide: step 1/1. The polypeptide is Bifunctional purine biosynthesis protein PurH (Streptococcus agalactiae serotype III (strain NEM316)).